We begin with the raw amino-acid sequence, 86 residues long: Large ribosomal subunit protein bL27 (86 aa).

The protein belongs to the bacterial ribosomal protein bL27 family.

The protein is Large ribosomal subunit protein bL27 of Xanthomonas oryzae pv. oryzae (strain PXO99A).